The sequence spans 274 residues: Large ribosomal subunit protein uL2 (274 aa).

The segment at 224–274 (VAMNPVDHPHGGGEGRTSGGRHPVTPWGIPTKGYKTRRNKRSNKLIVQKRK) is disordered. The span at 257–274 (YKTRRNKRSNKLIVQKRK) shows a compositional bias: basic residues.

It belongs to the universal ribosomal protein uL2 family. In terms of assembly, part of the 50S ribosomal subunit. Forms a bridge to the 30S subunit in the 70S ribosome.

In terms of biological role, one of the primary rRNA binding proteins. Required for association of the 30S and 50S subunits to form the 70S ribosome, for tRNA binding and peptide bond formation. It has been suggested to have peptidyltransferase activity; this is somewhat controversial. Makes several contacts with the 16S rRNA in the 70S ribosome. This Francisella tularensis subsp. mediasiatica (strain FSC147) protein is Large ribosomal subunit protein uL2.